Consider the following 276-residue polypeptide: Streptothricin hydrolase (276 aa).

C176 (nucleophile) is an active-site residue. The tract at residues 250-276 (PEAPAAAAAPAAGTGLSPAGPPPAPAR) is disordered. The span at 252-267 (APAAAAAPAAGTGLSP) shows a compositional bias: low complexity.

It belongs to the isochorismatase family. As to quaternary structure, homodimer. The cofactor is Does not require a metal cofactor..

The enzyme catalyses streptothricin F + H2O = streptothricin F acid. Its function is as follows. Catalyzes the hydrolysis of the amide bond of streptolidine lactam, thereby conferring streptothricin (ST) resistance. Can hydrolyze streptothricin-F and streptothricin-D. However, this strain is believed to be a ST nonproducer, which raises the possibility that its true role may not be its involvement in self-resistance to STs. May catalyze the hydrolysis of naturally occurring cyclic amide compounds that are structurally related to STs. This chain is Streptothricin hydrolase (sttH), found in Streptomyces noursei (Streptomyces albulus).